The primary structure comprises 141 residues: Small ribosomal subunit protein uS9c (141 aa).

The protein belongs to the universal ribosomal protein uS9 family.

It is found in the plastid. The protein resides in the chloroplast. This chain is Small ribosomal subunit protein uS9c (rps9), found in Tupiella akineta (Green alga).